The sequence spans 446 residues: UDP-N-acetylmuramoylalanine--D-glutamate ligase (446 aa).

118-124 (GSNGKST) serves as a coordination point for ATP.

This sequence belongs to the MurCDEF family.

It is found in the cytoplasm. The catalysed reaction is UDP-N-acetyl-alpha-D-muramoyl-L-alanine + D-glutamate + ATP = UDP-N-acetyl-alpha-D-muramoyl-L-alanyl-D-glutamate + ADP + phosphate + H(+). It participates in cell wall biogenesis; peptidoglycan biosynthesis. Cell wall formation. Catalyzes the addition of glutamate to the nucleotide precursor UDP-N-acetylmuramoyl-L-alanine (UMA). The chain is UDP-N-acetylmuramoylalanine--D-glutamate ligase from Pseudoalteromonas translucida (strain TAC 125).